The following is a 448-amino-acid chain: MSSRKLSGPKGRRLSIHVVTWNVASAAPPLDLSDLLQLNNRNLNLDIYVIGLQELNSGIISLLSDAAFNDSWSSFLMDVLSPLSFIKVSHVRMQGILLLVFAKYQHLPYIQILSTKSTPTGLFGYWGNKGGVNICLKLYGYYVSIINCHLPPHISNNYQRLEHFDRILEMQNCEGRDIPNILDHDLIIWFGDMNFRIEDFGLHFVRESIKNRCYGGLWEKDQLSIAKKHDPLLREFQEGRLLFPPTYKFDRNSNDYDTSEKKRKPAWTDRILWRLKRQPCAGPDTPIPPASHFSLSLRGYSSHMTYGISDHKPVSGTFDLELKPLVSAPLIVLMPEDLWTVENDMMVSYSSTSDFPSSPWDWIGLYKVGLRDVNDYVSYAWVGDSKVSCSDNLNQVYIDISNIPTTEDEFLLCYYSNSLRSVVGISRPFQIPPGSLREDPLGEAQPQI.

Residues 16–318 (IHVVTWNVAS…SDHKPVSGTF (303 aa)) are catalytic. A required for interaction with GPR78 and PAK1 region spans residues 318-448 (FDLELKPLVS…DPLGEAQPQI (131 aa)). The required for ruffle localization stretch occupies residues 321–448 (ELKPLVSAPL…DPLGEAQPQI (128 aa)).

The protein belongs to the inositol 1,4,5-trisphosphate 5-phosphatase type II family. In terms of assembly, interacts with GPR78; necessary for INPP5K localization at the endoplasmic reticulum. Interacts with PAK1; competes with GPR78. As to expression, ubiquitously expressed with highest levels in skeletal muscle, heart and kidney.

Its subcellular location is the endoplasmic reticulum. It localises to the cytoplasm. The catalysed reaction is 1D-myo-inositol 1,4,5-trisphosphate + H2O = 1D-myo-inositol 1,4-bisphosphate + phosphate. The enzyme catalyses 1D-myo-inositol 1,3,4,5-tetrakisphosphate + H2O = 1D-myo-inositol 1,3,4-trisphosphate + phosphate. It carries out the reaction a 1,2-diacyl-sn-glycero-3-phospho-(1D-myo-inositol-4,5-bisphosphate) + H2O = a 1,2-diacyl-sn-glycero-3-phospho-(1D-myo-inositol 4-phosphate) + phosphate. It catalyses the reaction a 1,2-diacyl-sn-glycero-3-phospho-(1D-myo-inositol-3,4,5-trisphosphate) + H2O = a 1,2-diacyl-sn-glycero-3-phospho-(1D-myo-inositol-3,4-bisphosphate) + phosphate. The catalysed reaction is 1,2-dioctanoyl-sn-glycero-3-phospho-(1D-myo-inositol-3,4,5-trisphosphate) + H2O = 1,2-dioctanoyl-sn-glycero-3-phospho-(1D-myo-inositol-3,4-bisphosphate) + phosphate. In terms of biological role, inositol 5-phosphatase which acts on inositol 1,4,5-trisphosphate, inositol 1,3,4,5-tetrakisphosphate, phosphatidylinositol 4,5-bisphosphate and phosphatidylinositol 3,4,5-trisphosphate. Has 6-fold higher affinity for phosphatidylinositol 4,5-bisphosphate than for inositol 1,4,5-trisphosphate. Negatively regulates assembly of the actin cytoskeleton. Controls insulin-dependent glucose uptake among inositol 3,4,5-trisphosphate phosphatases; therefore, is the specific regulator for insulin signaling in skeletal muscle. The polypeptide is Inositol polyphosphate 5-phosphatase K (Homo sapiens (Human)).